A 102-amino-acid chain; its full sequence is MYAIIQTGGKQIKVEEGQTVYVEKLAAEAGETVTFDNVLFVGGENVKVGSPTVEGATVTGKVEKQGRAKKITVFKYKPKKNQHKKQGHRQPYTKVVIEKINA.

The protein belongs to the bacterial ribosomal protein bL21 family. As to quaternary structure, part of the 50S ribosomal subunit. Contacts protein L20.

Functionally, this protein binds to 23S rRNA in the presence of protein L20. This Bacillus licheniformis (strain ATCC 14580 / DSM 13 / JCM 2505 / CCUG 7422 / NBRC 12200 / NCIMB 9375 / NCTC 10341 / NRRL NRS-1264 / Gibson 46) protein is Large ribosomal subunit protein bL21.